Reading from the N-terminus, the 243-residue chain is Carboxy-S-adenosyl-L-methionine synthase (243 aa).

S-adenosyl-L-methionine is bound by residues Tyr40, 65-67 (GSS), 90-91 (DN), 118-119 (DI), Asn133, and Arg200.

This sequence belongs to the class I-like SAM-binding methyltransferase superfamily. Cx-SAM synthase family. As to quaternary structure, homodimer.

It catalyses the reaction prephenate + S-adenosyl-L-methionine = carboxy-S-adenosyl-L-methionine + 3-phenylpyruvate + H2O. Catalyzes the conversion of S-adenosyl-L-methionine (SAM) to carboxy-S-adenosyl-L-methionine (Cx-SAM). The protein is Carboxy-S-adenosyl-L-methionine synthase of Shewanella denitrificans (strain OS217 / ATCC BAA-1090 / DSM 15013).